The primary structure comprises 294 residues: Putative glucose-6-phosphate 1-epimerase (294 aa).

Substrate is bound by residues arginine 74 and arginine 99. Histidine 164 is a catalytic residue. Aspartate 208 provides a ligand contact to substrate. Glutamate 267 is a catalytic residue.

This sequence belongs to the glucose-6-phosphate 1-epimerase family. In terms of assembly, monomer in solution.

It carries out the reaction alpha-D-glucose 6-phosphate = beta-D-glucose 6-phosphate. The chain is Putative glucose-6-phosphate 1-epimerase (yeaD) from Escherichia coli (strain K12).